Here is a 103-residue protein sequence, read N- to C-terminus: Small ribosomal subunit protein uS10 (103 aa).

Belongs to the universal ribosomal protein uS10 family. In terms of assembly, part of the 30S ribosomal subunit.

Its function is as follows. Involved in the binding of tRNA to the ribosomes. The chain is Small ribosomal subunit protein uS10 from Borreliella burgdorferi (strain ATCC 35210 / DSM 4680 / CIP 102532 / B31) (Borrelia burgdorferi).